We begin with the raw amino-acid sequence, 354 residues long: Vascular endothelial growth factor D (354 aa).

The signal sequence occupies residues 1–21 (MYREWVVVNVFMMLYVQLVQG). Positions 22 to 88 (SSNEHGPVKR…SRSASHRSTR (67 aa)) are cleaved as a propeptide — or 99 (in a minor form). 3 cysteine pairs are disulfide-bonded: C111/C153, C142/C189, and C146/C191. N155 and N185 each carry an N-linked (GlcNAc...) asparagine glycan. Residues 206-354 (SIQIPEEDRC…AQGPHSRKNP (149 aa)) constitute a propeptide that is removed on maturation. The stretch at 222–237 (CPIDMLWDSNKCKCVL) is one 1; approximate repeat. The tract at residues 222 to 318 (CPIDMLWDSN…PDTCSCEDRC (97 aa)) is 4 X 16 AA repeats of C-X(10)-C-X-C-X(1,3)-C. Repeat copies occupy residues 258 to 273 (CGPH…ECVC), 277 to 293 (CPKD…CFEC), and 301 to 318 (CQKH…EDRC). N-linked (GlcNAc...) asparagine glycosylation occurs at N287.

Belongs to the PDGF/VEGF growth factor family. As to quaternary structure, homodimer; non-covalent and antiparallel. Undergoes a complex proteolytic maturation which generates a variety of processed secreted forms with increased activity toward VEGFR-3 and VEGFR-2. VEGF-D first form an antiparallel homodimer linked by disulfide bonds before secretion. The fully processed VEGF-D is composed mostly of two VEGF homology domains (VHDs) bound by non-covalent interactions. In terms of tissue distribution, highly expressed in lung, heart, small intestine and fetal lung, and at lower levels in skeletal muscle, colon, and pancreas.

It is found in the secreted. Its function is as follows. Growth factor active in angiogenesis, lymphangiogenesis and endothelial cell growth, stimulating their proliferation and migration and also has effects on the permeability of blood vessels. May function in the formation of the venous and lymphatic vascular systems during embryogenesis, and also in the maintenance of differentiated lymphatic endothelium in adults. Binds and activates VEGFR-2 (KDR/FLK1) and VEGFR-3 (FLT4) receptors. This is Vascular endothelial growth factor D from Homo sapiens (Human).